Consider the following 267-residue polypeptide: Tryptophan synthase alpha chain (267 aa).

Catalysis depends on proton acceptor residues E47 and D58.

The protein belongs to the TrpA family. As to quaternary structure, tetramer of two alpha and two beta chains.

The catalysed reaction is (1S,2R)-1-C-(indol-3-yl)glycerol 3-phosphate + L-serine = D-glyceraldehyde 3-phosphate + L-tryptophan + H2O. It participates in amino-acid biosynthesis; L-tryptophan biosynthesis; L-tryptophan from chorismate: step 5/5. In terms of biological role, the alpha subunit is responsible for the aldol cleavage of indoleglycerol phosphate to indole and glyceraldehyde 3-phosphate. In Chlorobium phaeobacteroides (strain DSM 266 / SMG 266 / 2430), this protein is Tryptophan synthase alpha chain.